The following is a 140-amino-acid chain: Alpha-lactalbumin (140 aa).

The signal sequence occupies residues 1 to 19 (MMSLLSLLLLGIALPATQA). The region spanning 20–140 (IDYRKCQASQ…CIEDLDQWRC (121 aa)) is the C-type lysozyme domain. 4 disulfide bridges follow: C25-C140, C47-C131, C80-C96, and C92-C110. Residue N63 is glycosylated (N-linked (GlcNAc...) asparagine). Ca(2+) is bound by residues K98, D101, D103, D106, and D107.

It belongs to the glycosyl hydrolase 22 family. Lactose synthase (LS) is a heterodimer of a catalytic component, beta1,4-galactosyltransferase (beta4Gal-T1) and a regulatory component, alpha-lactalbumin (LA). In terms of tissue distribution, mammary gland specific. Secreted in milk.

It is found in the secreted. In terms of biological role, regulatory subunit of lactose synthase, changes the substrate specificity of galactosyltransferase in the mammary gland making glucose a good acceptor substrate for this enzyme. This enables LS to synthesize lactose, the major carbohydrate component of milk. In other tissues, galactosyltransferase transfers galactose onto the N-acetylglucosamine of the oligosaccharide chains in glycoproteins. In Notamacropus eugenii (Tammar wallaby), this protein is Alpha-lactalbumin (LALBA).